Here is a 270-residue protein sequence, read N- to C-terminus: Type III pantothenate kinase (270 aa).

Residue 16-23 coordinates ATP; it reads EIGNTTAM. Substrate is bound by residues Tyr106 and 113-116; that span reads GADR. The active-site Proton acceptor is the Asp115. Asp136 contacts K(+). Position 139 (Thr139) interacts with ATP. Thr191 provides a ligand contact to substrate.

It belongs to the type III pantothenate kinase family. Homodimer. NH4(+) is required as a cofactor. The cofactor is K(+).

The protein localises to the cytoplasm. The enzyme catalyses (R)-pantothenate + ATP = (R)-4'-phosphopantothenate + ADP + H(+). It functions in the pathway cofactor biosynthesis; coenzyme A biosynthesis; CoA from (R)-pantothenate: step 1/5. Functionally, catalyzes the phosphorylation of pantothenate (Pan), the first step in CoA biosynthesis. The sequence is that of Type III pantothenate kinase from Chlorobium luteolum (strain DSM 273 / BCRC 81028 / 2530) (Pelodictyon luteolum).